The primary structure comprises 686 residues: U3 small nucleolar RNA-associated protein 4 homolog (686 aa).

WD repeat units lie at residues 7-50 (HRVR…ANYF), 51-92 (QEKF…QALN), 93-135 (IKYA…PDKI), 136-181 (QFER…AVHK), 182-226 (MIVD…SATG), 227-275 (TLVK…SSEK), 276-317 (QWVR…LMEK), 318-377 (VEVK…PLSK), 378-427 (NADH…NISL), 428-475 (KRVS…KHLH), 476-516 (AFQP…VKQL), 517-566 (KLHC…WSRT), 567-627 (VQKQ…FPPT), and 628-666 (NESDVIRRRTAHAFKISKIYKPLLFMDLLDERTLVAVER). Residue Lys321 forms a Glycyl lysine isopeptide (Lys-Gly) (interchain with G-Cter in SUMO2) linkage.

Interacts with HIVEP1 Interacts with NOL11. Part of the small subunit (SSU) processome, composed of more than 70 proteins and the RNA chaperone small nucleolar RNA (snoRNA) U3. May be a component of the proposed t-UTP subcomplex of the ribosomal small subunit (SSU) processome containing at least UTP4, WDR43, HEATR1, UTP15, WDR75. Post-translationally, may be phosphorylated during mitosis; may control the association of this protein with WRD43 and UTP15.

It localises to the nucleus. It is found in the nucleolus. The protein localises to the chromosome. Functionally, ribosome biogenesis factor. Involved in nucleolar processing of pre-18S ribosomal RNA. Part of the small subunit (SSU) processome, first precursor of the small eukaryotic ribosomal subunit. During the assembly of the SSU processome in the nucleolus, many ribosome biogenesis factors, an RNA chaperone and ribosomal proteins associate with the nascent pre-rRNA and work in concert to generate RNA folding, modifications, rearrangements and cleavage as well as targeted d Involved in SSU pre-rRNA processing at sites A', A0, 1 and 2b. Required for optimal pre-ribosomal RNA transcription by RNA polymerase. May be a transcriptional regulator. (Microbial infection) Acts as a positive regulator of HIVEP1 which specifically binds to the DNA sequence 5'-GGGACTTTCC-3' found in enhancer elements of numerous viral promoters such as those of HIV-1, SV40, or CMV. The chain is U3 small nucleolar RNA-associated protein 4 homolog from Homo sapiens (Human).